The following is a 294-amino-acid chain: MPEEKVWSVVELLKTTIAFFAEKKIDEPRLSAELLLGHVLGLQRLQLYLDHERPLTLKELEAFRAACRERLQGRPVQYIAGEAFFYGYQFFVDERVLIPRPETELVLEHAMERLAASGLDSADSPSILDVGTGSGCIAITLALRLPGARVTAADVSADALDVARRNADAHGVSERIRFVEADALSASFADAVGGPFDLLVSNPPYIPEAEWATLQEEVRRYEPRLALVAPTGFEYYQSIAVAAPSLLRKGGVLCFELHADGAAEVRNLLGSSFADVQVMQDYNKLDRGLSCMAQ.

Residues 131–135 (GTGSG), aspartate 154, and asparagine 202 each bind S-adenosyl-L-methionine. Substrate is bound at residue 202–205 (NPPY).

Belongs to the protein N5-glutamine methyltransferase family. PrmC subfamily.

The enzyme catalyses L-glutaminyl-[peptide chain release factor] + S-adenosyl-L-methionine = N(5)-methyl-L-glutaminyl-[peptide chain release factor] + S-adenosyl-L-homocysteine + H(+). Functionally, methylates the class 1 translation termination release factors RF1/PrfA and RF2/PrfB on the glutamine residue of the universally conserved GGQ motif. The polypeptide is Release factor glutamine methyltransferase (Chlorobaculum tepidum (strain ATCC 49652 / DSM 12025 / NBRC 103806 / TLS) (Chlorobium tepidum)).